The chain runs to 182 residues: Small ribosomal subunit protein uS4c (182 aa).

Residues 8 to 36 are disordered; that stretch reads LGALPGLTSKRPGSGSDPKNKSRSGKRSQ. The S4 RNA-binding domain occupies 82–143; it reads MRLDNILFRL…KQRSKALIQN (62 aa).

It belongs to the universal ribosomal protein uS4 family. As to quaternary structure, part of the 30S ribosomal subunit. Contacts protein S5. The interaction surface between S4 and S5 is involved in control of translational fidelity.

It localises to the plastid. The protein resides in the chloroplast. Its function is as follows. One of the primary rRNA binding proteins, it binds directly to 16S rRNA where it nucleates assembly of the body of the 30S subunit. In terms of biological role, with S5 and S12 plays an important role in translational accuracy. The chain is Small ribosomal subunit protein uS4c (rps4) from Dietes robinsoniana (Lord Howe wedding lily).